The following is a 225-amino-acid chain: Peptidyl-tRNA hydrolase (225 aa).

Residue Tyr-14 participates in tRNA binding. Residue His-19 is the Proton acceptor of the active site. 3 residues coordinate tRNA: Phe-64, Asn-66, and Asn-112. A disordered region spans residues 184 to 225 (ALRMQPPKPEKPKPAAKAPEAQAPEAAPDARSALQKLADRFR). Over residues 198–210 (AAKAPEAQAPEAA) the composition is skewed to low complexity.

Belongs to the PTH family. Monomer.

Its subcellular location is the cytoplasm. It catalyses the reaction an N-acyl-L-alpha-aminoacyl-tRNA + H2O = an N-acyl-L-amino acid + a tRNA + H(+). Hydrolyzes ribosome-free peptidyl-tRNAs (with 1 or more amino acids incorporated), which drop off the ribosome during protein synthesis, or as a result of ribosome stalling. In terms of biological role, catalyzes the release of premature peptidyl moieties from peptidyl-tRNA molecules trapped in stalled 50S ribosomal subunits, and thus maintains levels of free tRNAs and 50S ribosomes. The polypeptide is Peptidyl-tRNA hydrolase (Cereibacter sphaeroides (strain KD131 / KCTC 12085) (Rhodobacter sphaeroides)).